The primary structure comprises 246 residues: NAD-dependent protein deacetylase (246 aa).

The Deacetylase sirtuin-type domain maps to 1-246; it reads MKKPDIQQLK…VIEEIVNSNS (246 aa). NAD(+) contacts are provided by alanine 25, phenylalanine 36, arginine 37, glutamine 106, isoleucine 108, aspartate 109, and histidine 124. Position 36 (phenylalanine 36) interacts with nicotinamide. Positions 108 and 109 each coordinate nicotinamide. Histidine 124 functions as the Proton acceptor in the catalytic mechanism. The Zn(2+) site is built by cysteine 132, cysteine 135, cysteine 152, and cysteine 155. 4 residues coordinate NAD(+): serine 193, serine 194, asparagine 216, and aspartate 233.

Belongs to the sirtuin family. Class U subfamily. Zn(2+) is required as a cofactor.

Its subcellular location is the cytoplasm. It catalyses the reaction N(6)-acetyl-L-lysyl-[protein] + NAD(+) + H2O = 2''-O-acetyl-ADP-D-ribose + nicotinamide + L-lysyl-[protein]. Its function is as follows. NAD-dependent protein deacetylase which modulates the activities of several enzymes which are inactive in their acetylated form. The protein is NAD-dependent protein deacetylase of Staphylococcus epidermidis (strain ATCC 35984 / DSM 28319 / BCRC 17069 / CCUG 31568 / BM 3577 / RP62A).